Consider the following 127-residue polypeptide: Small ribosomal subunit protein uS13 (127 aa).

The tract at residues 90 to 127 (RRHRQGLPVRGQRTRTNARTRRGRRVTVAGKKKAPSKK) is disordered. The segment covering 101–127 (QRTRTNARTRRGRRVTVAGKKKAPSKK) has biased composition (basic residues).

The protein belongs to the universal ribosomal protein uS13 family. Part of the 30S ribosomal subunit. Forms a loose heterodimer with protein S19. Forms two bridges to the 50S subunit in the 70S ribosome.

In terms of biological role, located at the top of the head of the 30S subunit, it contacts several helices of the 16S rRNA. In the 70S ribosome it contacts the 23S rRNA (bridge B1a) and protein L5 of the 50S subunit (bridge B1b), connecting the 2 subunits; these bridges are implicated in subunit movement. Contacts the tRNAs in the A and P-sites. This chain is Small ribosomal subunit protein uS13, found in Rippkaea orientalis (strain PCC 8801 / RF-1) (Cyanothece sp. (strain PCC 8801)).